Reading from the N-terminus, the 194-residue chain is Amidophosphoribosyltransferase (194 aa).

A propeptide spanning residues 1–11 (MPHEPKGLNEE) is cleaved from the precursor. The active-site Nucleophile is Cys-12. The region spanning 12 to 194 (CGVFGVWGNP…PHGFRPMVVG (183 aa)) is the Glutamine amidotransferase type-2 domain.

In the C-terminal section; belongs to the purine/pyrimidine phosphoribosyltransferase family.

The catalysed reaction is 5-phospho-beta-D-ribosylamine + L-glutamate + diphosphate = 5-phospho-alpha-D-ribose 1-diphosphate + L-glutamine + H2O. Its pathway is purine metabolism; IMP biosynthesis via de novo pathway; N(1)-(5-phospho-D-ribosyl)glycinamide from 5-phospho-alpha-D-ribose 1-diphosphate: step 1/2. Functionally, catalyzes the formation of phosphoribosylamine from phosphoribosylpyrophosphate (PRPP) and glutamine. This Lacticaseibacillus casei (Lactobacillus casei) protein is Amidophosphoribosyltransferase.